A 113-amino-acid polypeptide reads, in one-letter code: UPF0251 protein Teth514_1147 (113 aa).

This sequence belongs to the UPF0251 family.

This is UPF0251 protein Teth514_1147 from Thermoanaerobacter sp. (strain X514).